Consider the following 150-residue polypeptide: Deoxyuridine 5'-triphosphate nucleotidohydrolase (150 aa).

Substrate-binding positions include 70–72 (RSG), N82, 86–88 (LID), and M96.

The protein belongs to the dUTPase family. The cofactor is Mg(2+).

It carries out the reaction dUTP + H2O = dUMP + diphosphate + H(+). The protein operates within pyrimidine metabolism; dUMP biosynthesis; dUMP from dCTP (dUTP route): step 2/2. This enzyme is involved in nucleotide metabolism: it produces dUMP, the immediate precursor of thymidine nucleotides and it decreases the intracellular concentration of dUTP so that uracil cannot be incorporated into DNA. The polypeptide is Deoxyuridine 5'-triphosphate nucleotidohydrolase (Baumannia cicadellinicola subsp. Homalodisca coagulata).